Reading from the N-terminus, the 415-residue chain is Glutamyl-tRNA reductase (415 aa).

Substrate contacts are provided by residues 49 to 52 (TCNR), S106, 111 to 113 (EPQ), and Q117. Catalysis depends on C50, which acts as the Nucleophile. 186 to 191 (GAGETI) is an NADP(+) binding site.

This sequence belongs to the glutamyl-tRNA reductase family. In terms of assembly, homodimer.

It carries out the reaction (S)-4-amino-5-oxopentanoate + tRNA(Glu) + NADP(+) = L-glutamyl-tRNA(Glu) + NADPH + H(+). It participates in porphyrin-containing compound metabolism; protoporphyrin-IX biosynthesis; 5-aminolevulinate from L-glutamyl-tRNA(Glu): step 1/2. Its function is as follows. Catalyzes the NADPH-dependent reduction of glutamyl-tRNA(Glu) to glutamate 1-semialdehyde (GSA). This is Glutamyl-tRNA reductase from Teredinibacter turnerae (strain ATCC 39867 / T7901).